The following is a 1345-amino-acid chain: DNA-directed RNA polymerase subunit beta (1345 aa).

This sequence belongs to the RNA polymerase beta chain family. The RNAP catalytic core consists of 2 alpha, 1 beta, 1 beta' and 1 omega subunit. When a sigma factor is associated with the core the holoenzyme is formed, which can initiate transcription.

It carries out the reaction RNA(n) + a ribonucleoside 5'-triphosphate = RNA(n+1) + diphosphate. Functionally, DNA-dependent RNA polymerase catalyzes the transcription of DNA into RNA using the four ribonucleoside triphosphates as substrates. This is DNA-directed RNA polymerase subunit beta from Shewanella oneidensis (strain ATCC 700550 / JCM 31522 / CIP 106686 / LMG 19005 / NCIMB 14063 / MR-1).